The primary structure comprises 558 residues: uncharacterized protein (558 aa).

The DhaL domain occupies 7–206 (SNFIDMLRLG…FACFLEGMLS (200 aa)).

This is an uncharacterized protein from Mycoplasma pneumoniae (strain ATCC 29342 / M129 / Subtype 1) (Mycoplasmoides pneumoniae).